The primary structure comprises 147 residues: Large ribosomal subunit protein uL13 (147 aa).

The protein belongs to the universal ribosomal protein uL13 family. As to quaternary structure, part of the 50S ribosomal subunit.

Functionally, this protein is one of the early assembly proteins of the 50S ribosomal subunit, although it is not seen to bind rRNA by itself. It is important during the early stages of 50S assembly. In Mycobacteroides abscessus (strain ATCC 19977 / DSM 44196 / CCUG 20993 / CIP 104536 / JCM 13569 / NCTC 13031 / TMC 1543 / L948) (Mycobacterium abscessus), this protein is Large ribosomal subunit protein uL13.